The primary structure comprises 381 residues: Cytochrome b (381 aa).

4 helical membrane-spanning segments follow: residues 34–54, 78–99, 114–134, and 179–199; these read FGSLLGLCLIIQILTGLFLAM, WLIRNIHANGASLFFICIYLHI, WNIGVILLFLLMATAFVGYVL, and FFAFHFLLPFLILALTIIHLL. Heme b-binding residues include H84 and H98. Positions 183 and 197 each coordinate heme b. H202 contributes to the a ubiquinone binding site. A run of 4 helical transmembrane segments spans residues 227-247, 289-309, 321-341, and 348-368; these read YKDILGFFAMIFFLAVLTLFI, LGGVLALLFSILILMLVPLLQ, MTQILFWFLVANSIILTWIGG, and FIMVGQIASISYFSMFLIIIP.

The protein belongs to the cytochrome b family. In terms of assembly, the cytochrome bc1 complex contains 3 respiratory subunits (MT-CYB, CYC1 and UQCRFS1), 2 core proteins (UQCRC1 and UQCRC2) and probably 6 low-molecular weight proteins. Heme b serves as cofactor.

Its subcellular location is the mitochondrion inner membrane. Functionally, component of the ubiquinol-cytochrome c reductase complex (complex III or cytochrome b-c1 complex) that is part of the mitochondrial respiratory chain. The b-c1 complex mediates electron transfer from ubiquinol to cytochrome c. Contributes to the generation of a proton gradient across the mitochondrial membrane that is then used for ATP synthesis. The chain is Cytochrome b (mt-cyb) from Galeocerdo cuvier (Tiger shark).